The chain runs to 108 residues: Iron-sulfur cluster assembly protein CyaY (108 aa).

This sequence belongs to the frataxin family.

Its function is as follows. Involved in iron-sulfur (Fe-S) cluster assembly. May act as a regulator of Fe-S biogenesis. This Pseudoalteromonas atlantica (strain T6c / ATCC BAA-1087) protein is Iron-sulfur cluster assembly protein CyaY.